We begin with the raw amino-acid sequence, 451 residues long: Bifunctional protein GlmU (451 aa).

The interval 1–217 (MKTLILAAGL…IDEVTGVNDR (217 aa)) is pyrophosphorylase. Residues 6-9 (LAAG), Lys20, Gln68, 73-74 (GT), 95-97 (YGD), Gly134, Glu146, Asn161, and Asn215 contribute to the UDP-N-acetyl-alpha-D-glucosamine site. Residue Asp97 participates in Mg(2+) binding. Residue Asn215 coordinates Mg(2+). Positions 218-238 (IQLSKLEKNMRKRINEKLMRE) are linker. The N-acetyltransferase stretch occupies residues 239 to 451 (GVRIIDPESV…GGNQNADSKE (213 aa)). Residues Arg320 and Lys338 each coordinate UDP-N-acetyl-alpha-D-glucosamine. The active-site Proton acceptor is His350. Tyr353 and Asn364 together coordinate UDP-N-acetyl-alpha-D-glucosamine. Acetyl-CoA contacts are provided by residues Ala367, 373–374 (NY), Ser392, Ala410, and Arg427.

It in the N-terminal section; belongs to the N-acetylglucosamine-1-phosphate uridyltransferase family. The protein in the C-terminal section; belongs to the transferase hexapeptide repeat family. As to quaternary structure, homotrimer. Mg(2+) is required as a cofactor.

The protein resides in the cytoplasm. The catalysed reaction is alpha-D-glucosamine 1-phosphate + acetyl-CoA = N-acetyl-alpha-D-glucosamine 1-phosphate + CoA + H(+). It carries out the reaction N-acetyl-alpha-D-glucosamine 1-phosphate + UTP + H(+) = UDP-N-acetyl-alpha-D-glucosamine + diphosphate. It participates in nucleotide-sugar biosynthesis; UDP-N-acetyl-alpha-D-glucosamine biosynthesis; N-acetyl-alpha-D-glucosamine 1-phosphate from alpha-D-glucosamine 6-phosphate (route II): step 2/2. The protein operates within nucleotide-sugar biosynthesis; UDP-N-acetyl-alpha-D-glucosamine biosynthesis; UDP-N-acetyl-alpha-D-glucosamine from N-acetyl-alpha-D-glucosamine 1-phosphate: step 1/1. Its pathway is bacterial outer membrane biogenesis; LPS lipid A biosynthesis. Functionally, catalyzes the last two sequential reactions in the de novo biosynthetic pathway for UDP-N-acetylglucosamine (UDP-GlcNAc). The C-terminal domain catalyzes the transfer of acetyl group from acetyl coenzyme A to glucosamine-1-phosphate (GlcN-1-P) to produce N-acetylglucosamine-1-phosphate (GlcNAc-1-P), which is converted into UDP-GlcNAc by the transfer of uridine 5-monophosphate (from uridine 5-triphosphate), a reaction catalyzed by the N-terminal domain. This is Bifunctional protein GlmU from Thermosipho africanus (strain TCF52B).